The primary structure comprises 253 residues: MKKKEEGFIIHPIPVLMDNIIWIWVKEKQAIVVDPAISEPVINLLKGNGLSLHSVLQTHHHEDHIGGTQELINVWPSASVIAAKSDLDRIQFQTKSVVDNEELDILGQKIKVIEVPGHTSNHICFFLQGSKESKIDPVLFCGDTLFGAGCGRLFEGTPEQMFNSLSRINNLPKNTKIYCAHEYTEANLRWAKSIFPEDIYIEERLKEVILRKSKGFLSIPSKLSEERKTNLFIRASNQREFAQLRLHKDNWKS.

Residues His59, His61, Asp63, His64, His118, Asp143, and His181 each contribute to the Zn(2+) site.

It belongs to the metallo-beta-lactamase superfamily. Glyoxalase II family. Monomer. It depends on Zn(2+) as a cofactor.

The enzyme catalyses an S-(2-hydroxyacyl)glutathione + H2O = a 2-hydroxy carboxylate + glutathione + H(+). It functions in the pathway secondary metabolite metabolism; methylglyoxal degradation; (R)-lactate from methylglyoxal: step 2/2. Its function is as follows. Thiolesterase that catalyzes the hydrolysis of S-D-lactoyl-glutathione to form glutathione and D-lactic acid. The polypeptide is Hydroxyacylglutathione hydrolase (Prochlorococcus marinus (strain SARG / CCMP1375 / SS120)).